Here is a 388-residue protein sequence, read N- to C-terminus: MASLLGAYPWPEGLECPALDAELSDGQSPPAVPRPPGDKGSESRIRRPMNAFMVWAKDERKRLAVQNPDLHNAELSKMLGKSWKALTLSQKRPYVDEAERLRLQHMQDYPNYKYRPRRKKQAKRLCKRVDPGFLLSSLSRDQNALPEKRSGSRGALGEKEDRGEYSPGTALPSLRGCYHEGPAGGGGGGTPSSVDTYPYGLPTPPEMSPLDVLEPEQTFFSSPCQEEHGHPRRIPHLPGHPYSPEYAPSPLHCSHPLGSLALGQSPGVSMMSPVPGCPPSPAYYSPATYHPLHSNLQAHLGQLSPPPEHPGFDALDQLSQVELLGDMDRNEFDQYLNTPGHPDSATGAMALSGHVPVSQVTPTGPTETSLISVLADATATYYNSYSVS.

Disordered regions lie at residues 20–46 and 140–197; these read DAEL…SRIR and RDQN…VDTY. 2 stretches are compositionally biased toward basic and acidic residues: residues 36–45 and 146–164; these read PGDKGSESRI and PEKR…DRGE. The segment at residues 45–113 is a DNA-binding region (HMG box); that stretch reads IRRPMNAFMV…QHMQDYPNYK (69 aa). Residues 268–388 form the Sox C-terminal domain; that stretch reads VSMMSPVPGC…ATYYNSYSVS (121 aa).

In terms of assembly, interacts with CTNNB1/beta-catenin; this interaction may lead to the proteasomal degradation of active CTNNB1 and thus inhibition of Wnt/beta-catenin-stimulated transcription. Widely expressed in adult and fetal tissues. Present both in mesenchymal and epithelial cells in some adult tissues, including colon. Tends to be down-regulated in prostate adenocarcinomas and colorectal tumors due to promoter hypermethylation.

It is found in the nucleus. The protein localises to the cytoplasm. Its function is as follows. Binds to and activates the CDH5 promoter, hence plays a role in the transcriptional regulation of genes expressed in the hemogenic endothelium and blocks further differentiation into blood precursors. May be required for the survival of both hematopoietic and endothelial precursors during specification. Competes with GATA4 for binding and activation of the FGF3 promoter. Represses Wnt/beta-catenin-stimulated transcription, probably by targeting CTNNB1 to proteasomal degradation. Binds the DNA sequence 5'-AACAAT-3'. This chain is Transcription factor SOX-7 (SOX7), found in Homo sapiens (Human).